The primary structure comprises 134 residues: Methylglyoxal synthase (134 aa).

The region spanning Met1–Glu134 is the MGS-like domain. Substrate-binding positions include His8, Lys12, Thr34–Thr37, and Ser54–Gly55. Asp60 serves as the catalytic Proton donor/acceptor. His87 serves as a coordination point for substrate.

The protein belongs to the methylglyoxal synthase family.

The enzyme catalyses dihydroxyacetone phosphate = methylglyoxal + phosphate. Functionally, catalyzes the formation of methylglyoxal from dihydroxyacetone phosphate. The protein is Methylglyoxal synthase of Listeria monocytogenes serotype 4b (strain CLIP80459).